Consider the following 155-residue polypeptide: Ribosomal RNA large subunit methyltransferase H (155 aa).

S-adenosyl-L-methionine contacts are provided by residues Leu-73, Gly-104, and 123–128 (LSPLTL).

Belongs to the RNA methyltransferase RlmH family. Homodimer.

The protein localises to the cytoplasm. It carries out the reaction pseudouridine(1915) in 23S rRNA + S-adenosyl-L-methionine = N(3)-methylpseudouridine(1915) in 23S rRNA + S-adenosyl-L-homocysteine + H(+). Its function is as follows. Specifically methylates the pseudouridine at position 1915 (m3Psi1915) in 23S rRNA. This Azotobacter vinelandii (strain DJ / ATCC BAA-1303) protein is Ribosomal RNA large subunit methyltransferase H.